The following is a 701-amino-acid chain: Triadin (701 aa).

Residues 1 to 28 (MTEITAEGNASTTTTVIDSKNGSVPKSP) are disordered. Topologically, residues 1 to 47 (MTEITAEGNASTTTTVIDSKNGSVPKSPGKVLKRTVTEDIVTTFSSP) are cytoplasmic. The span at 8–24 (GNASTTTTVIDSKNGSV) shows a compositional bias: polar residues. The chain crosses the membrane as a helical span at residues 48–68 (AAWLLVIALIITWSAVAVVMF). The Lumenal portion of the chain corresponds to 69 to 701 (DLVDYKNFSA…SSPGQKQQGQ (633 aa)). Asn75 carries N-linked (GlcNAc...) asparagine glycosylation. Over residues 117–130 (DGDEDDDDGDEDTD) the composition is skewed to acidic residues. 3 disordered regions span residues 117–256 (DGDE…KHEQ), 273–654 (GDLR…TKRQ), and 676–701 (FPVTPAYRPGESSGQPSSPGQKQQGQ). Composition is skewed to basic and acidic residues over residues 131–256 (KGEI…KHEQ), 303–351 (EGKE…KAPE), 365–385 (AKKDEKKEDSKKTKTPVEEHP), 391–426 (EKKEKYVEPAKSSKKEHSAPSEKQVKAKTERAKEET), 437–485 (GKKE…EVKP), and 492–643 (VKKE…KAKE). The N-linked (GlcNAc...) asparagine glycan is linked to Asn617. Low complexity predominate over residues 684–701 (PGESSGQPSSPGQKQQGQ).

In terms of assembly, homooligomer of variable subunit number; disulfide-linked. Interacts with CASQ1 and RYR1 in skeletal muscle. Interacts with CASQ2. In terms of processing, phosphorylated by CaMK2. N-glycosylated. Detected in heart (at protein level). Skeletal and cardiac muscle.

The protein localises to the sarcoplasmic reticulum membrane. Its function is as follows. Contributes to the regulation of lumenal Ca2+ release via the sarcoplasmic reticulum calcium release channels RYR1 and RYR2, a key step in triggering skeletal and heart muscle contraction. Required for normal organization of the triad junction, where T-tubules and the sarcoplasmic reticulum terminal cisternae are in close contact. Required for normal skeletal muscle strength. Plays a role in excitation-contraction coupling in the heart and in regulating the rate of heart beats. This chain is Triadin (TRDN), found in Canis lupus familiaris (Dog).